The primary structure comprises 158 residues: Small ribosomal subunit protein uS9 (158 aa).

It belongs to the universal ribosomal protein uS9 family.

The sequence is that of Small ribosomal subunit protein uS9 from Brucella melitensis biotype 2 (strain ATCC 23457).